The following is a 147-amino-acid chain: Mucoricin (147 aa).

The 140-residue stretch at 4-143 (EEGRLFFIKS…VSANQRWELV (140 aa)) folds into the Ricin B-type lectin domain.

Belongs to the ribosome-inactivating protein family. Type 1 RIP subfamily.

Its subcellular location is the secreted. It catalyses the reaction Endohydrolysis of the N-glycosidic bond at one specific adenosine on the 28S rRNA.. In terms of biological role, N-glycosylase that inhibits protein synthesis in the host by depurinating ribosomal rRNA, and thus acts as a ribosomal inactivating protein (RIP). Promotes vascular permeability in the host and induces necrosis and apoptosis of host alveolar epithelial cells. The sequence is that of Mucoricin from Rhizopus delemar (strain RA 99-880 / ATCC MYA-4621 / FGSC 9543 / NRRL 43880) (Mucormycosis agent).